Reading from the N-terminus, the 134-residue chain is Profilin-5 (134 aa).

It belongs to the profilin family. In terms of assembly, occurs in many kinds of cells as a complex with monomeric actin in a 1:1 ratio. Specifically expressed in mature pollen grains. Expressed in germinating pollen grains. Expressed in growing pollen tubes (at protein level).

Its subcellular location is the cytoplasm. The protein resides in the cytoskeleton. Its function is as follows. Binds to actin monomers and regulates the organization of the actin cytoskeleton. At high concentrations, profilin prevents the polymerization of actin, whereas it enhances it at low concentrations. At low concentrations, associates with the poly-proline motif of formins to enhance actin filament elongation rate. Acts redundantly with PRF4 to regulate apical actin polymerization at the tip of pollen tube and control polarized pollen tube growth. Functions probably by favoring formin-mediated actin polymerization at pollen tube tips. The polypeptide is Profilin-5 (Arabidopsis thaliana (Mouse-ear cress)).